A 398-amino-acid polypeptide reads, in one-letter code: Steroid C26-monooxygenase (398 aa).

Cys340 contacts heme.

Belongs to the cytochrome P450 family. It depends on heme as a cofactor.

The enzyme catalyses cholest-4-en-3-one + 6 reduced [2Fe-2S]-[ferredoxin] + 3 O2 + 5 H(+) = (25R)-3-oxocholest-4-en-26-oate + 6 oxidized [2Fe-2S]-[ferredoxin] + 4 H2O. It carries out the reaction cholest-4-en-3-one + 2 reduced [2Fe-2S]-[ferredoxin] + O2 + 2 H(+) = (25R)-3-oxocholest-4-en-26-ol + 2 oxidized [2Fe-2S]-[ferredoxin] + H2O. The catalysed reaction is (25R)-3-oxocholest-4-en-26-ol + 2 reduced [2Fe-2S]-[ferredoxin] + O2 + 2 H(+) = (25R)-3-oxocholest-4-en-26-al + 2 oxidized [2Fe-2S]-[ferredoxin] + 2 H2O. It catalyses the reaction (25R)-3-oxocholest-4-en-26-al + 2 reduced [2Fe-2S]-[ferredoxin] + O2 + H(+) = (25R)-3-oxocholest-4-en-26-oate + 2 oxidized [2Fe-2S]-[ferredoxin] + H2O. The enzyme catalyses cholesterol + NADPH + O2 + H(+) = 26-hydroxycholesterol + NADP(+) + H2O. It carries out the reaction 26-hydroxycholesterol + 2 reduced [2Fe-2S]-[ferredoxin] + O2 + 2 H(+) = (3beta)-hydroxy-cholest-5-en-26-al + 2 oxidized [2Fe-2S]-[ferredoxin] + 2 H2O. The catalysed reaction is (3beta)-hydroxy-cholest-5-en-26-al + NADPH + O2 = (3beta)-hydroxy-cholest-5-en-26-oate + NADP(+) + H2O. It catalyses the reaction (25S)-3-oxocholest-4-en-26-ol + 2 reduced [2Fe-2S]-[ferredoxin] + O2 + 2 H(+) = (25S)-3-oxocholest-4-en-26-al + 2 oxidized [2Fe-2S]-[ferredoxin] + 2 H2O. The enzyme catalyses (25S)-3-oxocholest-4-en-26-al + 2 reduced [2Fe-2S]-[ferredoxin] + O2 + H(+) = (25S)-3-oxocholest-4-en-26-oate + 2 oxidized [2Fe-2S]-[ferredoxin] + H2O. It functions in the pathway steroid metabolism; cholesterol degradation. With respect to regulation, inhibited by econazole, clotrimazole and miconazole. Involved in the utilization of cholesterol as the sole carbon and energy source by degrading the side chain during infection. Primarily catalyzes the sequential oxidation of the terminal methyl of cholest-4-en-3-one into (25R)-26-hydroxycholest-4-en-3-one (alcohol), (25R)-26-oxocholest-4-en-3-one (aldehyde), to finally yield the carboxylic acid (25R)-3-oxocholest-4-en-26-oate. In vitro, Cyp142 catalyzes with equal preference the oxidation of both (25R)- and (25S)-26-hydroxycholest-4-en-3-one diastereomers to the corresponding carboxylic acid which is a prerequisite for entry into the beta-oxidation pathway. Also able to sequentially oxidize cholesterol itself, not only cholest-4-en-3-one. This Mycobacterium tuberculosis (strain ATCC 25618 / H37Rv) protein is Steroid C26-monooxygenase (cyp142).